The primary structure comprises 331 residues: Ketol-acid reductoisomerase (NADP(+)) (331 aa).

Positions 2 to 182 constitute a KARI N-terminal Rossmann domain; the sequence is VEIYYDDDAN…GGTRAGALRT (181 aa). Residues 25–28, S51, and S53 each bind NADP(+); that span reads FGSQ. The active site involves H108. An NADP(+)-binding site is contributed by G134. The KARI C-terminal knotted domain maps to 183–328; the sequence is TFTEETETDL…GKLRPMMSWI (146 aa). 4 residues coordinate Mg(2+): D191, E195, E227, and E231. S252 provides a ligand contact to substrate.

It belongs to the ketol-acid reductoisomerase family. Requires Mg(2+) as cofactor.

The enzyme catalyses (2R)-2,3-dihydroxy-3-methylbutanoate + NADP(+) = (2S)-2-acetolactate + NADPH + H(+). It catalyses the reaction (2R,3R)-2,3-dihydroxy-3-methylpentanoate + NADP(+) = (S)-2-ethyl-2-hydroxy-3-oxobutanoate + NADPH + H(+). It participates in amino-acid biosynthesis; L-isoleucine biosynthesis; L-isoleucine from 2-oxobutanoate: step 2/4. It functions in the pathway amino-acid biosynthesis; L-valine biosynthesis; L-valine from pyruvate: step 2/4. Its function is as follows. Involved in the biosynthesis of branched-chain amino acids (BCAA). Catalyzes an alkyl-migration followed by a ketol-acid reduction of (S)-2-acetolactate (S2AL) to yield (R)-2,3-dihydroxy-isovalerate. In the isomerase reaction, S2AL is rearranged via a Mg-dependent methyl migration to produce 3-hydroxy-3-methyl-2-ketobutyrate (HMKB). In the reductase reaction, this 2-ketoacid undergoes a metal-dependent reduction by NADPH to yield (R)-2,3-dihydroxy-isovalerate. The chain is Ketol-acid reductoisomerase (NADP(+)) from Parafrankia sp. (strain EAN1pec).